Here is a 305-residue protein sequence, read N- to C-terminus: Ribosomal RNA large subunit methyltransferase F (305 aa).

Belongs to the methyltransferase superfamily. METTL16/RlmF family.

The protein localises to the cytoplasm. The enzyme catalyses adenosine(1618) in 23S rRNA + S-adenosyl-L-methionine = N(6)-methyladenosine(1618) in 23S rRNA + S-adenosyl-L-homocysteine + H(+). Specifically methylates the adenine in position 1618 of 23S rRNA. In Enterobacter sp. (strain 638), this protein is Ribosomal RNA large subunit methyltransferase F.